The primary structure comprises 364 residues: tRNA-specific 2-thiouridylase MnmA 1 (364 aa).

ATP contacts are provided by residues 10–17 (GMSGGVDS) and M36. C106 (nucleophile) is an active-site residue. A disulfide bridge links C106 with C204. G130 serves as a coordination point for ATP. The segment at 154–156 (KDQ) is interaction with tRNA. The active-site Cysteine persulfide intermediate is the C204. The interval 310–311 (RY) is interaction with tRNA.

It belongs to the MnmA/TRMU family.

The protein resides in the cytoplasm. It catalyses the reaction S-sulfanyl-L-cysteinyl-[protein] + uridine(34) in tRNA + AH2 + ATP = 2-thiouridine(34) in tRNA + L-cysteinyl-[protein] + A + AMP + diphosphate + H(+). Catalyzes the 2-thiolation of uridine at the wobble position (U34) of tRNA, leading to the formation of s(2)U34. This is tRNA-specific 2-thiouridylase MnmA 1 from Thermoanaerobacter pseudethanolicus (strain ATCC 33223 / 39E) (Clostridium thermohydrosulfuricum).